A 400-amino-acid chain; its full sequence is CCA-adding enzyme (400 aa).

2 residues coordinate ATP: Gly32 and Arg35. Residues Gly32 and Arg35 each coordinate CTP. The Mg(2+) site is built by Asp45 and Asp47. ATP contacts are provided by Arg116, Asp159, Arg162, Arg165, and Arg168. Residues Arg116, Asp159, Arg162, Arg165, and Arg168 each contribute to the CTP site.

The protein belongs to the tRNA nucleotidyltransferase/poly(A) polymerase family. Bacterial CCA-adding enzyme type 3 subfamily. Homodimer. It depends on Mg(2+) as a cofactor.

The catalysed reaction is a tRNA precursor + 2 CTP + ATP = a tRNA with a 3' CCA end + 3 diphosphate. The enzyme catalyses a tRNA with a 3' CCA end + 2 CTP + ATP = a tRNA with a 3' CCACCA end + 3 diphosphate. Functionally, catalyzes the addition and repair of the essential 3'-terminal CCA sequence in tRNAs without using a nucleic acid template. Adds these three nucleotides in the order of C, C, and A to the tRNA nucleotide-73, using CTP and ATP as substrates and producing inorganic pyrophosphate. tRNA 3'-terminal CCA addition is required both for tRNA processing and repair. Also involved in tRNA surveillance by mediating tandem CCA addition to generate a CCACCA at the 3' terminus of unstable tRNAs. While stable tRNAs receive only 3'-terminal CCA, unstable tRNAs are marked with CCACCA and rapidly degraded. This chain is CCA-adding enzyme, found in Limosilactobacillus fermentum (strain NBRC 3956 / LMG 18251) (Lactobacillus fermentum).